Reading from the N-terminus, the 448-residue chain is Antizyme inhibitor 1 (448 aa).

Belongs to the Orn/Lys/Arg decarboxylase class-II family. ODC antizyme inhibitor subfamily. As to quaternary structure, monomer. Interacts with OAZ1 and OAZ3; this interaction disrupts the interaction between the antizyme and ODC1. In terms of processing, ubiquitinated, leading to its proteasomal degradation; a process that is reduced in presence of antizyme OAZ1. As to expression, expressed during testis development.

The protein localises to the nucleus. Its function is as follows. Antizyme inhibitor (AZI) protein that positively regulates ornithine decarboxylase (ODC) activity and polyamine uptake. AZI is an enzymatically inactive ODC homolog that counteracts the negative effect of ODC antizymes (AZs) OAZ1, OAZ2 and OAZ3 on ODC activity by competing with ODC for antizyme-binding. Inhibits antizyme-dependent ODC degradation and releases ODC monomers from their inactive complex with antizymes, leading to formation of the catalytically active ODC homodimer and restoring polyamine production. The sequence is that of Antizyme inhibitor 1 (Azin1) from Mus musculus (Mouse).